A 516-amino-acid polypeptide reads, in one-letter code: Nucleolar complex protein 4 homolog (516 aa).

Helical transmembrane passes span 296–316 (SACD…FILI), 347–367 (FFHL…LVAA), and 375–395 (LALT…CNLL).

The protein belongs to the CBF/MAK21 family.

It localises to the nucleus membrane. It is found in the nucleus. The protein localises to the nucleolus. This Mus musculus (Mouse) protein is Nucleolar complex protein 4 homolog (Noc4l).